A 638-amino-acid polypeptide reads, in one-letter code: Probable lysine-specific demethylase 4F (638 aa).

The region spanning 15–57 is the JmjN domain; sequence IMTFYPTMEEFADFNTYVAYMESQGAHRAGLAKVIPPKEWKAR. Residue Tyr-133 coordinates 2-oxoglutarate. The region spanning 143 to 309 is the JmjC domain; that stretch reads EESTKQWNLG…YGKVASQCSC (167 aa). Fe cation-binding residues include His-189 and Glu-191. The 2-oxoglutarate site is built by Asn-199 and Lys-207. 2 residues coordinate Zn(2+): Cys-235 and His-241. A 2-oxoglutarate-binding site is contributed by Lys-242. His-277 contributes to the Fe cation binding site. Zn(2+) is bound by residues Cys-307 and Cys-309. A disordered region spans residues 426-474; the sequence is PCRGCGRGRGRGRGRGRRPRELGTEETTVQSAAKRRLSVGTGSRAPGRK. The span at 431–443 shows a compositional bias: basic residues; sequence GRGRGRGRGRGRR.

It belongs to the JHDM3 histone demethylase family. Fe(2+) is required as a cofactor.

It localises to the nucleus. It catalyses the reaction N(6),N(6),N(6)-trimethyl-L-lysyl(9)-[histone H3] + 2 2-oxoglutarate + 2 O2 = N(6)-methyl-L-lysyl(9)-[histone H3] + 2 formaldehyde + 2 succinate + 2 CO2. Its function is as follows. Probable histone demethylase that specifically demethylates 'Lys-9' of histone H3, thereby playing a central role in histone code. This Homo sapiens (Human) protein is Probable lysine-specific demethylase 4F.